A 605-amino-acid chain; its full sequence is MSSKKAKTKNEASSSRGGIGGESIVADCGRNKSTCGYCKSSTRFSISHGLWTERLTVNDYQALLDSGWRRSGCYLYKPEMEKTCCPSYTIRLKASDFVPSKEQQRVRRRIERFLDGELDAKPSEQTEDQDVSFSREVSVSVKKSLGAAKREKNNELEPIMKDLSEQIDNAVQKCIQSGEFPSNVQIPKASVKKVFSAKRKKLAEGSEDLLYTSNIAFPIVAAMKHTQTLEKGKNVEENRLSPEAVSEKLLSAMNKVGEFTGFSVKVSKGHINFLSATQVTSSDRNEGEESLCATTIKSSSNKLHARKRKLEMHLKRSSFEPEEYELYKRYQMKVHNDKPESISETSYKRFLVDTPLTEVPSSGYDDEEKIPLCGFGSFHQQYRVDDRLIAVGVIDILPKCLSSKYLFWDPDFASLSLGNYSALQEIDWVKQNQAHCSTLEYYYLGYYIHSCNKMRYKAAYRPSELLCPLRYQWVPFEVAKPLLDKKPYSVLSNISKVSSSSSSPQASETLLESTSEHEDMEQGDTNDDDDEMYNSDEDSDSDSSSSRNRSDITNILISLNGPRLRYKDIPRFKNPVVQKQLESMLVSYRKVVGAELSEIMVYELR.

Residues 496-513 show a composition bias toward low complexity; it reads KVSSSSSSPQASETLLES. A disordered region spans residues 496-549; that stretch reads KVSSSSSSPQASETLLESTSEHEDMEQGDTNDDDDEMYNSDEDSDSDSSSSRNR. Residues 518–541 show a composition bias toward acidic residues; sequence EDMEQGDTNDDDDEMYNSDEDSDS.

Belongs to the R-transferase family.

It carries out the reaction an N-terminal L-alpha-aminoacyl-[protein] + L-arginyl-tRNA(Arg) = an N-terminal L-arginyl-L-aminoacyl-[protein] + tRNA(Arg) + H(+). In terms of biological role, involved in the post-translational conjugation of arginine to the N-terminal aspartate or glutamate of a protein. This arginylation is required for degradation of the protein via the ubiquitin pathway. Component of the N-end rule pathway with ATE1 and PRT6. The N-end rule pathway regulates seed after-ripening, seedling sugar sensitivity, seedling lipid breakdown, and abscisic acid (ABA) sensitivity of germination. The end-rule pathway regulates various aspects of leaf and shoot development. Involved in the oxygen-dependent N-arginylation of RAP2-12, an activator of hypoxic gene expression. This N-terminal modification leads to ubiquitination by PRT6 and subsequent degradation of RAP2-12 under aerobic conditions. Involved in disease resistance. The end-rule pathway plays a role in regulating the timing and amplitude of the immune response following infection with the bacterial pathogen Pseudomonas syringae pv tomato. Regulates the biosynthesis of plant-defense metabolites such as glucosinolates, and the biosynthesis and response to the phytohormone jasmonate (JA), which plays a key role in plant immunity. In Arabidopsis thaliana (Mouse-ear cress), this protein is Arginyl-tRNA--protein transferase 2.